The following is a 96-amino-acid chain: Ribonuclease P protein component 1 (96 aa).

It belongs to the eukaryotic/archaeal RNase P protein component 1 family. Consists of a catalytic RNA component and at least 4-5 protein subunits.

It is found in the cytoplasm. The catalysed reaction is Endonucleolytic cleavage of RNA, removing 5'-extranucleotides from tRNA precursor.. Its function is as follows. Part of ribonuclease P, a protein complex that generates mature tRNA molecules by cleaving their 5'-ends. The polypeptide is Ribonuclease P protein component 1 (Methanococcus aeolicus (strain ATCC BAA-1280 / DSM 17508 / OCM 812 / Nankai-3)).